A 292-amino-acid polypeptide reads, in one-letter code: NAD kinase (292 aa).

Asp-73 acts as the Proton acceptor in catalysis. NAD(+) is bound by residues 73-74, 147-148, His-158, Arg-175, Asp-177, 188-193, and Gln-247; these read DG, NE, and TAYSLS.

It belongs to the NAD kinase family. The cofactor is a divalent metal cation.

It localises to the cytoplasm. The enzyme catalyses NAD(+) + ATP = ADP + NADP(+) + H(+). Its function is as follows. Involved in the regulation of the intracellular balance of NAD and NADP, and is a key enzyme in the biosynthesis of NADP. Catalyzes specifically the phosphorylation on 2'-hydroxyl of the adenosine moiety of NAD to yield NADP. The protein is NAD kinase of Shigella boydii serotype 18 (strain CDC 3083-94 / BS512).